Consider the following 173-residue polypeptide: Ribulose bisphosphate carboxylase small subunit, chloroplastic 2 (173 aa).

A chloroplast-targeting transit peptide spans 1-33; it reads VVLSKECAKPLATPKVTLNKRGFATTIATKNRE.

Belongs to the RuBisCO small chain family. In terms of assembly, heterohexadecamer of 8 large and 8 small subunits.

The protein resides in the plastid. It localises to the chloroplast. Functionally, ruBisCO catalyzes two reactions: the carboxylation of D-ribulose 1,5-bisphosphate, the primary event in carbon dioxide fixation, as well as the oxidative fragmentation of the pentose substrate. Both reactions occur simultaneously and in competition at the same active site. Although the small subunit is not catalytic it is essential for maximal activity. In Acetabularia acetabulum (Mermaid's wine glass), this protein is Ribulose bisphosphate carboxylase small subunit, chloroplastic 2.